The chain runs to 250 residues: 3-deoxy-manno-octulosonate cytidylyltransferase (250 aa).

This sequence belongs to the KdsB family.

It localises to the cytoplasm. It catalyses the reaction 3-deoxy-alpha-D-manno-oct-2-ulosonate + CTP = CMP-3-deoxy-beta-D-manno-octulosonate + diphosphate. It functions in the pathway nucleotide-sugar biosynthesis; CMP-3-deoxy-D-manno-octulosonate biosynthesis; CMP-3-deoxy-D-manno-octulosonate from 3-deoxy-D-manno-octulosonate and CTP: step 1/1. The protein operates within bacterial outer membrane biogenesis; lipopolysaccharide biosynthesis. In terms of biological role, activates KDO (a required 8-carbon sugar) for incorporation into bacterial lipopolysaccharide in Gram-negative bacteria. This Legionella pneumophila (strain Lens) protein is 3-deoxy-manno-octulosonate cytidylyltransferase.